The primary structure comprises 444 residues: Adenine permease AdeQ (444 aa).

The Cytoplasmic portion of the chain corresponds to 1 to 29 (MNNDNTDYVSNESGTLSRLFKLPQHGTTV). A helical transmembrane segment spans residues 30–53 (RTELIAGMTTFLTMVYIVFVNPQI). Over 54–63 (LGAAQMDPKV) the chain is Periplasmic. The chain crosses the membrane as a helical span at residues 64-82 (VFVTTCLIAGIGSIAMGIF). The Cytoplasmic segment spans residues 83 to 84 (AN). Residues 85–101 (LPVALAPAMGLNAFFAF) traverse the membrane as a discontinuously helical segment. Over 102-113 (VVVGAMGISWQT) the chain is Periplasmic. The chain crosses the membrane as a helical span at residues 114–133 (GMGAIFWGAVGLFLLTLFRI). Residues 134-145 (RYWMISNIPLSL) are Cytoplasmic-facing. A helical membrane pass occupies residues 146–166 (RIGITSGIGLFIALMGLKNTG). Residues 167–182 (VIVANKDTLVMIGDLS) are Periplasmic-facing. The helical transmembrane segment at 183-200 (SHGVLLGILGFFIITVLS) threads the bilayer. At 201–204 (SRHF) the chain is on the cytoplasmic side. Residues 205 to 223 (HAAVLVSIVVTSCCGLFFG) form a helical membrane-spanning segment. Over 224–251 (DVHFSGVYSIPPDISGVIGEVDLSGALT) the chain is Periplasmic. The helical transmembrane segment at 252–280 (LELAGIIFSFMLINLFDSSGTLIGVTDKA) threads the bilayer. Residues 281–293 (GLIDGNGKFPNMN) are Cytoplasmic-facing. Residues 294-309 (KALYVDSVSSVAGAFI) traverse the membrane as a helical segment. At 310–311 (GT) the chain is on the periplasmic side. A discontinuously helical transmembrane segment spans residues 312–327 (SSVTAYIESTSGVAVG). The Cytoplasmic portion of the chain corresponds to 328–331 (GRTG). Residues 332 to 346 (LTAVVVGVMFLLVMF) form a helical membrane-spanning segment. At 347–357 (FSPLVAIVPPY) the chain is on the periplasmic side. A helical transmembrane segment spans residues 358-377 (ATAGALIFVGVLMTSSLARV). The Cytoplasmic portion of the chain corresponds to 378–382 (NWDDF). The segment at residues 383 to 418 (TESVPAFITTVMMPFTFSITEGIALGFMSYCIMKVC) is an intramembrane region (discontinuously helical). The Cytoplasmic portion of the chain corresponds to 419 to 444 (TGRWRDLNLCVVVVAALFALKIILVD).

Belongs to the nucleobase:cation symporter-2 (NCS2) (TC 2.A.40) family. Azg-like subfamily.

Its subcellular location is the cell inner membrane. Its function is as follows. High-affinity transporter for adenine. This is Adenine permease AdeQ (adeQ) from Escherichia coli (strain K12).